Consider the following 146-residue polypeptide: Large ribosomal subunit protein uL15 (146 aa).

Residues Met1–Gln54 form a disordered region. Gly residues-rich tracts occupy residues Arg21–Ala31 and Ser42–Gly52.

This sequence belongs to the universal ribosomal protein uL15 family. Part of the 50S ribosomal subunit.

Its function is as follows. Binds to the 23S rRNA. In Clostridium botulinum (strain Eklund 17B / Type B), this protein is Large ribosomal subunit protein uL15.